We begin with the raw amino-acid sequence, 301 residues long: ATP synthase gamma chain (301 aa).

The protein belongs to the ATPase gamma chain family. F-type ATPases have 2 components, CF(1) - the catalytic core - and CF(0) - the membrane proton channel. CF(1) has five subunits: alpha(3), beta(3), gamma(1), delta(1), epsilon(1). CF(0) has three main subunits: a, b and c.

The protein resides in the cell inner membrane. In terms of biological role, produces ATP from ADP in the presence of a proton gradient across the membrane. The gamma chain is believed to be important in regulating ATPase activity and the flow of protons through the CF(0) complex. In Helicobacter acinonychis (strain Sheeba), this protein is ATP synthase gamma chain.